A 457-amino-acid polypeptide reads, in one-letter code: MATQDADIIIIGAGITGCALGAALGRQGRKVLVLERDMSEPDRIVGELLQPGGIEALEKIGIADAVEGIDGQWTSGYQIFYGDSNVSVPYPSKPNGGAYQGIGFHYGRFVMNLRKALTSTPNVTVTEATVNELLRDETGEVITGVVTSSKKSESPVEYKAPLTIVCDGCFSKFRKAFIDHPIQVTDHFLGLILTNPDYIAPGRGHVILSKVAPMVLYPISSTEARILINYPGKNLPPMETLKKYVLESCVPNMPEKLRPSLKAAVYNDRLRSMPNQFLPPTVNRTKGMILVGDSNNMRHPLTGGGMTVCFHDAYLLSRFISPSAVPDLLDYERILNQMNKFHWKRKGYSFVINVLSIALYKLFTPKNRYMKALESGCIDYFKRGGNCVEGPIRLLGGLDHSPSHLIGHFYAVCLYGIYQYVLSGPALLMPVRIIESLLIFLQASLVIIPYILSEMSS.

FAD-binding positions include 15 to 16, 35 to 36, R43, R114, V130, D293, and M306; these read IT and ER. 3 helical membrane-spanning segments follow: residues 347-364, 409-429, and 433-453; these read GYSFVINVLSIALYKLFT, FYAVCLYGIYQYVLSGPALLM, and IIESLLIFLQASLVIIPYILS.

It belongs to the squalene monooxygenase family. FAD is required as a cofactor.

It is found in the microsome membrane. Its subcellular location is the endoplasmic reticulum membrane. The protein resides in the vacuole membrane. The enzyme catalyses squalene + reduced [NADPH--hemoprotein reductase] + O2 = (S)-2,3-epoxysqualene + oxidized [NADPH--hemoprotein reductase] + H2O + H(+). The protein operates within terpene metabolism; lanosterol biosynthesis; lanosterol from farnesyl diphosphate: step 2/3. It functions in the pathway steroid metabolism; ergosterol biosynthesis. Activity is blocked by the allylamine class antifungal terbinafine. In terms of biological role, squalene epoxidase; part of the third module of ergosterol biosynthesis pathway that includes by the late steps of the pathway. Erg1 catalyzes the epoxidation of squalene into 2,3-epoxysqualene. The third module or late pathway involves the ergosterol synthesis itself through consecutive reactions that mainly occur in the endoplasmic reticulum (ER) membrane. Firstly, the squalene synthase erg9 catalyzes the condensation of 2 farnesyl pyrophosphate moieties to form squalene, which is the precursor of all steroids. Secondly, squalene is converted into lanosterol by the consecutive action of the squalene epoxidase erg1 and the lanosterol synthase erg7. The lanosterol 14-alpha-demethylase erg11/cyp1 catalyzes C14-demethylation of lanosterol to produce 4,4'-dimethyl cholesta-8,14,24-triene-3-beta-ol. In the next steps, a complex process involving various demethylation, reduction and desaturation reactions catalyzed by the C-14 reductase erg24 and the C-4 demethylation complex erg25-erg26-erg27 leads to the production of zymosterol. Erg28 likely functions in the C-4 demethylation complex reaction by tethering erg26 and Erg27 to the endoplasmic reticulum or to facilitate interaction between these proteins. Then, the sterol 24-C-methyltransferase erg6 catalyzes the methyl transfer from S-adenosyl-methionine to the C-24 of zymosterol to form fecosterol. The C-8 sterol isomerase erg2 catalyzes the reaction which results in unsaturation at C-7 in the B ring of sterols and thus converts fecosterol to episterol. The sterol-C5-desaturases erg31 and erg32 then catalyze the introduction of a C-5 double bond in the B ring to produce 5-dehydroepisterol. The C-22 sterol desaturase erg5 further converts 5-dehydroepisterol into ergosta-5,7,22,24(28)-tetraen-3beta-ol by forming the C-22(23) double bond in the sterol side chain. Finally, ergosta-5,7,22,24(28)-tetraen-3beta-ol is substrate of the C-24(28) sterol reductase erg4 to produce ergosterol. In the genus Schizosaccharomyces, a second route exists between lanosterol and fecosterol, via the methylation of lanosterol to eburicol by erg6, followed by C14-demethylation by erg11/cyp1 and C4-demethylation by the demethylation complex erg25-erg26-erg27. The chain is Squalene epoxidase erg1 from Schizosaccharomyces pombe (strain 972 / ATCC 24843) (Fission yeast).